We begin with the raw amino-acid sequence, 368 residues long: Chorismate synthase (368 aa).

NADP(+) is bound at residue R46. Residues 124 to 126 (RAS), G284, 299 to 303 (KPTPS), and R326 each bind FMN.

The protein belongs to the chorismate synthase family. Requires FMNH2 as cofactor.

It catalyses the reaction 5-O-(1-carboxyvinyl)-3-phosphoshikimate = chorismate + phosphate. Its pathway is metabolic intermediate biosynthesis; chorismate biosynthesis; chorismate from D-erythrose 4-phosphate and phosphoenolpyruvate: step 7/7. In terms of biological role, catalyzes the anti-1,4-elimination of the C-3 phosphate and the C-6 proR hydrogen from 5-enolpyruvylshikimate-3-phosphate (EPSP) to yield chorismate, which is the branch point compound that serves as the starting substrate for the three terminal pathways of aromatic amino acid biosynthesis. This reaction introduces a second double bond into the aromatic ring system. The protein is Chorismate synthase of Pyrobaculum arsenaticum (strain DSM 13514 / JCM 11321 / PZ6).